The primary structure comprises 216 residues: ATP-dependent Clp protease proteolytic subunit (216 aa).

The active-site Nucleophile is Ser-101. The active site involves His-126.

This sequence belongs to the peptidase S14 family. In terms of assembly, component of the chloroplastic Clp protease core complex.

The protein localises to the plastid. It is found in the chloroplast stroma. It catalyses the reaction Hydrolysis of proteins to small peptides in the presence of ATP and magnesium. alpha-casein is the usual test substrate. In the absence of ATP, only oligopeptides shorter than five residues are hydrolyzed (such as succinyl-Leu-Tyr-|-NHMec, and Leu-Tyr-Leu-|-Tyr-Trp, in which cleavage of the -Tyr-|-Leu- and -Tyr-|-Trp bonds also occurs).. Its function is as follows. Cleaves peptides in various proteins in a process that requires ATP hydrolysis. Has a chymotrypsin-like activity. Plays a major role in the degradation of misfolded proteins. This chain is ATP-dependent Clp protease proteolytic subunit, found in Triticum aestivum (Wheat).